A 74-amino-acid chain; its full sequence is Protein YkgV (74 aa).

This Escherichia coli (strain K12) protein is Protein YkgV.